Reading from the N-terminus, the 543-residue chain is Protein P78/83 (543 aa).

Disordered stretches follow at residues 147 to 222, 235 to 325, and 373 to 400; these read QALP…QPAA, RNEK…SLSN, and MAKS…ANTP. Residues 182–221 show a composition bias toward pro residues; it reads AAPPPPPSPVPNIPAPPPPPPPSMSELPPAPPMPTEPQPA. Residues 226–246 form the WH2 domain; sequence DRQQLLEAIRNEKNRTRLRPV. Positions 271–321 are enriched in pro residues; the sequence is PKPPSASPPPPPPPPPPPAPPAPPPMVDLSSAPPPPPLVDLPSEMLPPPAP. Positions 375–384 are enriched in polar residues; that stretch reads KSSSEATSND.

Forms a complex with proteins C42 and E27. Interacts with host actin-related protein 2/3 complex. Interacts with protein Ac102.

The protein localises to the host cytoplasm. The protein resides in the host nucleus. Plays a role in the transport of the nucleocapsids from the cytoplasm toward the host nucleus together with the host actin-polymerizing Arp2/3 complex. This chain is Protein P78/83 (P61), found in Lepidoptera (butterflies and moths).